A 491-amino-acid chain; its full sequence is Probable malate:quinone oxidoreductase (491 aa).

It belongs to the MQO family. The cofactor is FAD.

The enzyme catalyses (S)-malate + a quinone = a quinol + oxaloacetate. It participates in carbohydrate metabolism; tricarboxylic acid cycle; oxaloacetate from (S)-malate (quinone route): step 1/1. This is Probable malate:quinone oxidoreductase from Actinobacillus pleuropneumoniae serotype 5b (strain L20).